We begin with the raw amino-acid sequence, 353 residues long: D-alanine--D-alanine ligase (353 aa).

Positions 141–349 constitute an ATP-grasp domain; that stretch reads KAAFAAAGLP…LEELVSQLVI (209 aa). An ATP-binding site is contributed by 176–231; it reads EAKLKYPCFVKPANLGSSVGISKAQNRNELLIGLDKAASLDRRIVVEQGVSARELE. Residues aspartate 302, glutamate 316, and asparagine 318 each coordinate Mg(2+).

This sequence belongs to the D-alanine--D-alanine ligase family. It depends on Mg(2+) as a cofactor. The cofactor is Mn(2+).

The protein localises to the cytoplasm. The catalysed reaction is 2 D-alanine + ATP = D-alanyl-D-alanine + ADP + phosphate + H(+). Its pathway is cell wall biogenesis; peptidoglycan biosynthesis. In terms of biological role, cell wall formation. The protein is D-alanine--D-alanine ligase of Prochlorococcus marinus (strain MIT 9313).